A 214-amino-acid polypeptide reads, in one-letter code: Small ribosomal subunit protein uS4c (214 aa).

Basic residues-rich tracts occupy residues 1 to 14 and 36 to 46; these read MSRY…KIKR and LSRPKPKKKSQ. The disordered stretch occupies residues 1–46; it reads MSRYRGPRVKKIKRLGSLPGLTTKKPPIVVRDPRKLSRPKPKKKSQ. One can recognise an S4 RNA-binding domain in the interval 92-153; the sequence is MRLDNTLFRL…KEKSKALIQN (62 aa).

This sequence belongs to the universal ribosomal protein uS4 family. Part of the 30S ribosomal subunit. Contacts protein S5. The interaction surface between S4 and S5 is involved in control of translational fidelity.

Its subcellular location is the plastid. It is found in the chloroplast. One of the primary rRNA binding proteins, it binds directly to 16S rRNA where it nucleates assembly of the body of the 30S subunit. In terms of biological role, with S5 and S12 plays an important role in translational accuracy. The polypeptide is Small ribosomal subunit protein uS4c (rps4) (Pelargonium hortorum (Common geranium)).